The sequence spans 127 residues: Small ribosomal subunit protein uS12 (127 aa).

Asp89 carries the 3-methylthioaspartic acid modification. The tract at residues 102-127 (LDTAGVKDRKQGRSKYGTKRPKEAKK) is disordered. A compositionally biased stretch (basic residues) spans 113–127 (GRSKYGTKRPKEAKK).

Belongs to the universal ribosomal protein uS12 family. As to quaternary structure, part of the 30S ribosomal subunit. Contacts proteins S8 and S17. May interact with IF1 in the 30S initiation complex.

In terms of biological role, with S4 and S5 plays an important role in translational accuracy. Functionally, interacts with and stabilizes bases of the 16S rRNA that are involved in tRNA selection in the A site and with the mRNA backbone. Located at the interface of the 30S and 50S subunits, it traverses the body of the 30S subunit contacting proteins on the other side and probably holding the rRNA structure together. The combined cluster of proteins S8, S12 and S17 appears to hold together the shoulder and platform of the 30S subunit. The sequence is that of Small ribosomal subunit protein uS12 from Nostoc punctiforme (strain ATCC 29133 / PCC 73102).